The sequence spans 312 residues: Olfactory receptor 6C75 (312 aa).

Residues 1–23 lie on the Extracellular side of the membrane; the sequence is MRNSTAVTDFILLGLTSDPQWQV. N-linked (GlcNAc...) asparagine glycosylation occurs at N3. A helical membrane pass occupies residues 24–44; the sequence is VLFIFLLVTYMLSVTGNLIII. Over 45-63 the chain is Cytoplasmic; the sequence is TLTLSDPHLQTPMYFFLRN. Residues 64-84 form a helical membrane-spanning segment; sequence FSFLEISFTSVCIPRFLVTVV. The Extracellular segment spans residues 85-95; it reads TGNRTISYNGC. C95 and C177 form a disulfide bridge. The helical transmembrane segment at 96-116 threads the bilayer; the sequence is VAQLFFFIFLGVTEFYLLAAM. At 117 to 140 the chain is on the cytoplasmic side; sequence SYDRCMAICKPLHYTIIMSTRVCT. The chain crosses the membrane as a helical span at residues 141 to 161; that stretch reads LLVFSSWLAGFLIIFPPVMLL. Over 162–194 the chain is Extracellular; it reads LQLDFCASNVIDHFICDSSPMLQLSCTNTHFLE. The helical transmembrane segment at 195–215 threads the bilayer; it reads LMAFFLAVVTLMVTLTLVILS. The Cytoplasmic portion of the chain corresponds to 216–237; sequence YTNIIRTILKIPSMSQRKKAFS. Residues 238 to 258 form a helical membrane-spanning segment; it reads TCSSHMIVVSISYSSCIFMYI. The Extracellular segment spans residues 259-269; sequence KTSARERVTLS. The chain crosses the membrane as a helical span at residues 270-290; that stretch reads KGVAVLNTSVAPLLNPFIYTL. Over 291–312 the chain is Cytoplasmic; the sequence is RNKQVKQAFKSMVQKMIFSLNK.

It belongs to the G-protein coupled receptor 1 family.

It localises to the cell membrane. In terms of biological role, odorant receptor. The protein is Olfactory receptor 6C75 (OR6C75) of Homo sapiens (Human).